Here is a 512-residue protein sequence, read N- to C-terminus: Cytochrome P450 monooxygenase adrA (512 aa).

A helical membrane pass occupies residues 12-32 (FEPVSLVGLVLLSGLFLLLTA). Residues N86, N149, and N210 are each glycosylated (N-linked (GlcNAc...) asparagine). C453 is a binding site for heme.

It belongs to the cytochrome P450 family. Requires heme as cofactor.

Its subcellular location is the membrane. It participates in secondary metabolite biosynthesis; terpenoid biosynthesis. Its function is as follows. Cytochrome P450 monooxygenase; part of the gene cluster that mediates the biosynthesis of andrastins, meroterpenoid compounds that exhibit inhibitory activity against ras farnesyltransferase, suggesting that they could be promising leads for antitumor agents. The first step of the pathway is the synthesis of 3,5-dimethylorsellinic acid (DMOA) by the polyketide synthase adrD via condensation of one acetyl-CoA starter unit with 3 malonyl-CoA units and 2 methylations. DMAO is then converted to farnesyl-DMAO by the prenyltransferase adrG. The methyltransferase adrK catalyzes the methylation of the carboxyl group of farnesyl-DMAO to farnesyl-DMAO methyl ester which is further converted to epoxyfarnesyl-DMAO methyl ester by the FAD-dependent monooxygenase adrH. The terpene cyclase adrI then catalyzes the carbon skeletal rearrangement to generate the andrastin E, the first compound in the pathway having the andrastin scaffold, with the tetracyclic ring system. The post-cyclization tailoring enzymes adrF, adrE, adrJ, and adrA, are involved in the conversion of andrastin E into andrastin A. The short chain dehydrogenase adrF is responsible for the oxidation of the C-3 a hydroxyl group of andrastin E to yield the corresponding ketone, andrastin D. The ketoreductase adrE stereoselectively reduces the carbonyl moiety to reverse the stereochemistry of the C-3 position to yield andrastin F. The acetyltransferase adrJ is the acetyltransferase that attaches the acetyl group to the C-3 hydroxyl group of andrastin F to yield andrastin C. Finally, the cytochrome P450 monooxygenase adrA catalyzes two sequential oxidation reactions of the C-23 methyl group, to generate the corresponding alcohol andrastin B, and aldehyde andrastin A. This Penicillium rubens (strain ATCC 28089 / DSM 1075 / NRRL 1951 / Wisconsin 54-1255) (Penicillium chrysogenum) protein is Cytochrome P450 monooxygenase adrA.